The primary structure comprises 417 residues: Neuropeptide FF receptor 2 (417 aa).

Residues 1 to 45 (MGKRWDSNSSGSWDHIWSGNDTQHPWYSDINITYMNYYLHQPHVT) are Extracellular-facing. N-linked (GlcNAc...) asparagine glycans are attached at residues Asn8, Asn20, and Asn31. Residues 46–66 (AVFISSYFLIFFLCMVGNTVV) traverse the membrane as a helical segment. Residues 67–82 (CFVVIRNRYMHTVTNF) are Cytoplasmic-facing. The helical transmembrane segment at 83-103 (FIFNLAISDLLVGIFCMPITL) threads the bilayer. Topologically, residues 104–119 (LDNIIAGWPFGSSMCK) are extracellular. Residues Cys118 and Cys206 are joined by a disulfide bond. The chain crosses the membrane as a helical span at residues 120-140 (ISGLVQGISVAASVFTLVAIA). Residues 141–160 (VDRFRCVVYPFKPKLTVKTA) are Cytoplasmic-facing. The helical transmembrane segment at 161-181 (FVMIVIIWGLAITIMTPSAIM) threads the bilayer. Residues 182–217 (LHVQEEKYYRVRLSSHNKTSTVYWCREDWPNQEMRR) lie on the Extracellular side of the membrane. An N-linked (GlcNAc...) asparagine glycan is attached at Asn198. The chain crosses the membrane as a helical span at residues 218-238 (IYTTVLFATIYLAPLSLIVIM). Residues 239 to 274 (YARIGASLFKTSAHSTGKQRLEQWHVSKKKQKVIKM) lie on the Cytoplasmic side of the membrane. A helical transmembrane segment spans residues 275–295 (LLTVALLFILSWLPLWTLMML). Residues 296–310 (SDYADLSPNKLRVIN) are Extracellular-facing. A helical transmembrane segment spans residues 311–331 (IYVYPFAHWLAFCNSSVNPII). The Cytoplasmic segment spans residues 332–417 (YGFFNENFRS…TGEATNSTET (86 aa)). Residues 378 to 417 (HEPASQNPSGENLGCRKSADNPTQESLMEETGEATNSTET) are disordered.

This sequence belongs to the G-protein coupled receptor 1 family.

It is found in the cell membrane. Its function is as follows. Receptor for NPAF (A-18-F-amide) and NPFF (F-8-F-amide) neuropeptides, also known as morphine-modulating peptides. Can also be activated by a variety of naturally occurring or synthetic FMRF-amide like ligands. This receptor mediates its action by association with G proteins that activate a phosphatidylinositol-calcium second messenger system. This Rattus norvegicus (Rat) protein is Neuropeptide FF receptor 2 (Npffr2).